Here is a 347-residue protein sequence, read N- to C-terminus: MFSSLFGVISNDIAIDLGTANTLIYQKGKGIVLNEPSVVALRNVGGRKVVHAVGIEAKQMLGRTPGHMEAIRPMRDGVIADFEVAEEMIKYFIRKVHNRKGFVNPKVIVCVPSGATAVERRAINDSCLNAGARRVGLIDEPMAAAIGAGLPIHEPTGSMVVDIGGGTTEVAVLSLSGIVYSRSVRVGGDKMDEAIISYMRRHHNLLIGETTAERIKKEIGTARAPADGEGLSIDVKGRDLMQGVPREVRISEKQAADALAEPVGQIVEAVKVALEATPPELASDIADKGIMLTGGGALLRGLDAEIRDHTGLPVTVADDPLSCVALGCGKVLEHPKWMKGVLESTLA.

Residues 19-21 (TAN), 165-167 (GGT), 213-216 (ERIK), and 295-298 (GGAL) contribute to the ATP site.

The protein belongs to the FtsA/MreB family. Forms polymers in the presence of ATP. Forms pairs of protofilaments that adopt an antiparallel arrangement and bind to lipids.

The protein resides in the cytoplasm. Forms membrane-associated dynamic filaments that are essential for cell shape determination. Acts by regulating cell wall synthesis and cell elongation, and thus cell shape. A feedback loop between cell geometry and MreB localization may maintain elongated cell shape by targeting cell wall growth to regions of negative cell wall curvature. Required for mid-cell peptidoglycan synthesis and cell division. Directs the localization of the cytosolic peptidoglycan precursor-synthesizing enzyme MurG. Also required for proper chromosome segregation. Directs the segregation of origin-proximal but not origin-distal loci. In Caulobacter vibrioides (strain NA1000 / CB15N) (Caulobacter crescentus), this protein is Cell shape-determining protein MreB.